Reading from the N-terminus, the 124-residue chain is Large ribosomal subunit protein uL18 (124 aa).

It belongs to the universal ribosomal protein uL18 family. Part of the 50S ribosomal subunit; part of the 5S rRNA/L5/L18/L25 subcomplex. Contacts the 5S and 23S rRNAs.

This is one of the proteins that bind and probably mediate the attachment of the 5S RNA into the large ribosomal subunit, where it forms part of the central protuberance. The chain is Large ribosomal subunit protein uL18 from Caldicellulosiruptor saccharolyticus (strain ATCC 43494 / DSM 8903 / Tp8T 6331).